A 474-amino-acid polypeptide reads, in one-letter code: MFQAILAIIPILWLILSLAVFRMRGDLACFIGLIITLLTSIIGFHFSIKDGLTAGLEGAMMGFWPIIYIIVAAVFTYNLTTASGGMTVIKRLLMTITEDKRILVLILAWGFGGFLEAIAGFGTAVAIPASILVALGMKPLRAALICLIANTTPTAFGAIGLPVTTLAQVTGLEVKQLSVIVSLQLFILIVAIPFVLVSLTGEGKRPIKGVFGITLASGLAFALPQILVSNYVGAELPSIIGSLFCILVTILFVNLRERGKNASPVGGDVAFKEGIIRCLPFILVFFFIMLTSSLFPAINQLLAKVSTTVSIYTGEHAKPYTIKWLTSPGTMIILATFIAGLIQGMSFKEIGSILAKVLNKLTKTMVTVASIVALSKVMSYSGMINTIAVSLVAVTGGFYPFIAPVIGTLGTFITGSDTSANVLFGELQVKAANNLNMNPYWMAAQYDRGNCRKNDFASKHCSCSGTYWFRRSRR.

11 helical membrane-spanning segments follow: residues 4–21 (AILA…LAVF), 28–48 (ACFI…HFSI), 63–85 (FWPI…ASGG), 105–127 (LILA…AVAI), 142–164 (AALI…LPVT), 177–199 (LSVI…LVSL), 209–231 (GVFG…VSNY), 238–255 (SIIG…FVNL), 281–303 (FILV…QLLA), 324–346 (WLTS…QGMS), and 387–409 (IAVS…IGTL).

This sequence belongs to the lactate permease family.

The protein localises to the cell membrane. In terms of biological role, plays a role in L-lactate utilization. The protein is L-lactate permease (lctP) of Streptococcus iniae (Streptococcus shiloi).